Consider the following 833-residue polypeptide: MNKSKVTSKKVVAETKVVNNKKSEPIAVSEPKKSVSKPTTTATTTVSKSPVSTITTQILGKRTKTPVVRDEENEDEKLDFGNIDLNNYNSEDDEDYESEEDDEGDDEEDVESQNGSIVYSESEEEEEGGINKALLEAEESLVEYQSEDDSGSISSKSSSSTTTTTTTTKKTNNDEEEVAPNKQWTNDPNQFYDSDDSSEDESLVNRIGNIPLEWYDDYDHIGYDVDGNKIMKTESMKDSIDKYLDQQDPNFWRTVYDKVNDKKVVLSDDDMALLKSIQNKHFIPGYDPYADWYDSGNNHPDSIHPMHNAPVPKRSFFPNGTDEEREIRRLTKAIRMGWIKLNKKGKKGEKDKKDGNFDLWADEGEEKEKTKGIRRIAAPKQKLPGNVESFNPPEEYLLNENELKAWHLMDPRERPHNFIPQKYQSLRQLPIYNKLIKERFERCLDLYLCPRTTRVKQFTKDPTKFLPTLPKPQDLRPFPSHEEIQFLGHKARVRSISISPNGQWLASGSDDCTIKIWEVSSTRCLYSLEVESEVQTVAWNPNPIYNILAVGYSNKIIIITPPLFGTQTEHSPETEKILTKPPTDSSTEQQQNKSVNWYQVTGADKAKLLEKGVRIEIHHPFTVKNLTWHYKGDYFSTTSPEEGTRSVKIHHLSKRATQSPFRKSKTPNQVTRFHPNKPIFFVADQNIIRVYDLMKQELIKKLITGCRYISSIDIHPQGDNVIMGGYDKKVCWFDLDLSVRPYKVLNYHKMAVRKVIYHPTLPLFASCSDDLSIHVFHGMVYDDLLQNALIVPLKILKTHESINDLGVLDIVFHPKQPWIFSSGADSTIRLYTN.

Residues 20–202 (NKKSEPIAVS…DSDDSSEDES (183 aa)) are disordered. Over residues 36-56 (SKPTTTATTTVSKSPVSTITT) the composition is skewed to low complexity. Acidic residues-rich tracts occupy residues 90 to 111 (SEDD…EDVE) and 136 to 150 (EAEE…EDDS). Positions 154–170 (SSKSSSSTTTTTTTTKK) are enriched in low complexity. The segment covering 182-192 (KQWTNDPNQFY) has biased composition (polar residues). The segment covering 193–202 (DSDDSSEDES) has biased composition (acidic residues). 3 WD repeats span residues 331 to 370 (TKAI…KEKT), 488 to 527 (GHKA…CLYS), and 529 to 569 (EVES…TQTE). Residues 568–592 (TEHSPETEKILTKPPTDSSTEQQQN) form a disordered region. Over residues 582-592 (PTDSSTEQQQN) the composition is skewed to polar residues. WD repeat units follow at residues 618–660 (HHPF…TQSP), 663–701 (KSKT…LIKK), 704–743 (TGCR…RPYK), 747–786 (YHKM…DLLQ), and 802–833 (INDL…LYTN).

This sequence belongs to the WD repeat BOP1/ERB1 family.

It is found in the nucleus. The protein resides in the nucleolus. The protein localises to the nucleoplasm. In terms of biological role, required for maturation of ribosomal RNAs and formation of the large ribosomal subunit. This is Ribosome biogenesis protein BOP1 homolog from Dictyostelium discoideum (Social amoeba).